The chain runs to 299 residues: Non-structural protein V (299 aa).

Residues 40 to 94 are disordered; the sequence is SDNPGQDRATCKEEEAGSSGLSKPCLSAIGSTEGGAPRIRGQGSGESDDDAETLG. An interaction with host STAT1 region spans residues 110–120; sequence YHVYDHSGEAV. Residues 133–143 show a composition bias toward low complexity; the sequence is SGLDGDSTLSG. Disordered stretches follow at residues 133–168 and 204–229; these read SGLDGDSTLSGGDDESENSDVDIGEPDTEGYAITDR and PKLGKTLNVPPPPNPSRASTSETPIK. Over residues 144–160 the composition is skewed to acidic residues; sequence GDDESENSDVDIGEPDT. Zn(2+) contacts are provided by His232, Cys251, Cys255, Cys267, Cys269, Cys272, Cys276, and Cys279.

It belongs to the paramyxoviruses V protein family. Interacts with host IFIH1/MDA5 and DHX58/LGP2; these interactions are involved in the inhibition of the host type I interferon signaling pathway. Interacts with host TYK2; this interaction inhibits the type I interferon signaling pathway without affecting the type II pathway. Interacts with host IRF7; this interaction inhibits IRF7 translocation to the nucleus. Interacts with host CHUK. Interacts with host RELA/p65; this interaction inhibits the nuclear translocation of NF-KappaB. Interacts (via N-terminus) with host STAT1 and JAK1; these interactions inhibit STAT1 phosphorylation by Jak1 and thereby the type I interferon signaling pathway. Interacts (via C-terminus) with host STAT2; this interaction is involved in the inhibition of the host type I interferon signaling pathway. Forms a complex with host PPP1CA and PPP1CC; this interaction prevents dephosphorylation of host IFIH1/MDA5 and leads to the inhibition of the host type I interferon signaling pathway. Interacts with host IRF9; this interaction prevents the binding of IRF9 to STAT2 and thereby the type I interferon signaling pathway. Interacts with host RIGI regulatory protein (via CARDs domain) and host TRIM25 (via SPRY domain); these interactions prevent TRIM25-mediated ubiquitination of RIG-I and disrupts downstream RIG-I signaling.

It is found in the host cytoplasm. Its function is as follows. Plays an essential role in the inhibition of host immune response. Prevents the establishment of cellular antiviral state by blocking interferon-alpha/beta (IFN-alpha/beta) production and signaling pathway. Interacts with host IFIH1/MDA5 and DHX58/LGP2 to inhibit the transduction pathway involved in the activation of IFN-beta promoter, thus protecting the virus against cell antiviral state. Blocks the type I interferon signaling pathway by interacting with host TYK2 and thereby inhibiting downstream STAT1 and STAT2 phosphorylation. Blocks the type I interferon signaling pathway by disrupting the RIG-I signaling pathway. Moderately affects the type II interferon signaling. Prevents PP1alpha/gamma-mediated dephosphorylation of host IFIH1/MDA5 and thus blocks its activation. The chain is Non-structural protein V (P/V) from Homo sapiens (Human).